A 447-amino-acid chain; its full sequence is Succinate--CoA ligase [ADP-forming] subunit beta, mitochondrial (447 aa).

The N-terminal 34 residues, 1 to 34, are a transit peptide targeting the mitochondrion; that stretch reads MFKLGRNRALASAFAATSRAPLASRLPSVSQQQR. Residues 45–287 form the ATP-grasp domain; sequence ADLLRQYGIG…TTQEDPDEVR (243 aa). ATP-binding positions include Lys82, 89-91, and Glu150; that span reads GRG. Mg(2+) is bound by residues Asn242 and Asp256. Substrate contacts are provided by residues Asn307 and 364 to 366; that span reads GIV.

This sequence belongs to the succinate/malate CoA ligase beta subunit family. As to quaternary structure, heterodimer of an alpha and a beta subunit. The cofactor is Mg(2+).

It is found in the mitochondrion. It catalyses the reaction succinate + ATP + CoA = succinyl-CoA + ADP + phosphate. It participates in carbohydrate metabolism; tricarboxylic acid cycle; succinate from succinyl-CoA (ligase route): step 1/1. In terms of biological role, succinyl-CoA synthetase functions in the citric acid cycle (TCA), coupling the hydrolysis of succinyl-CoA to the synthesis of ATP and thus represents the only step of substrate-level phosphorylation in the TCA. The beta subunit provides nucleotide specificity of the enzyme and binds the substrate succinate, while the binding sites for coenzyme A and phosphate are found in the alpha subunit. In Neurospora crassa (strain ATCC 24698 / 74-OR23-1A / CBS 708.71 / DSM 1257 / FGSC 987), this protein is Succinate--CoA ligase [ADP-forming] subunit beta, mitochondrial.